The primary structure comprises 462 residues: 3-isopropylmalate dehydratase large subunit (462 aa).

Residues C337, C397, and C400 each coordinate [4Fe-4S] cluster.

It belongs to the aconitase/IPM isomerase family. LeuC type 1 subfamily. In terms of assembly, heterodimer of LeuC and LeuD. [4Fe-4S] cluster is required as a cofactor.

The catalysed reaction is (2R,3S)-3-isopropylmalate = (2S)-2-isopropylmalate. Its pathway is amino-acid biosynthesis; L-leucine biosynthesis; L-leucine from 3-methyl-2-oxobutanoate: step 2/4. Catalyzes the isomerization between 2-isopropylmalate and 3-isopropylmalate, via the formation of 2-isopropylmaleate. The sequence is that of 3-isopropylmalate dehydratase large subunit from Listeria welshimeri serovar 6b (strain ATCC 35897 / DSM 20650 / CCUG 15529 / CIP 8149 / NCTC 11857 / SLCC 5334 / V8).